Here is an 87-residue protein sequence, read N- to C-terminus: Acylphosphatase (87 aa).

Positions 1-87 constitute an Acylphosphatase-like domain; it reads MAWVHGRVQG…EDYQDFRIRY (87 aa). Residues Arg-14 and Asn-32 contribute to the active site.

The protein belongs to the acylphosphatase family.

It catalyses the reaction an acyl phosphate + H2O = a carboxylate + phosphate + H(+). This Cronobacter sakazakii (strain ATCC BAA-894) (Enterobacter sakazakii) protein is Acylphosphatase (acyP).